We begin with the raw amino-acid sequence, 715 residues long: ATP-dependent DNA helicase Hel308 (715 aa).

Residues Gln-35 and 53-60 (SPTGSGKT) each bind ATP. A Helicase ATP-binding domain is found at 40–203 (KKGLLDGNRL…WLGAEPVATN (164 aa)). The DEAH box signature appears at 152 to 155 (DELH). The Helicase C-terminal domain maps to 236–442 (HGDDAIIAYT…ERAFYTFLLG (207 aa)).

This sequence belongs to the helicase family. Hel308 subfamily. Monomer. Interacts with PINA ATPase which decreases both DNA helicase activities of this protein.

The catalysed reaction is Couples ATP hydrolysis with the unwinding of duplex DNA by translocating in the 3'-5' direction.. The enzyme catalyses ATP + H2O = ADP + phosphate + H(+). It carries out the reaction Couples ATP hydrolysis with the unwinding of duplex DNA at the replication fork by translocating in the 5'-3' direction. This creates two antiparallel DNA single strands (ssDNA). The leading ssDNA polymer is the template for DNA polymerase III holoenzyme which synthesizes a continuous strand.. With respect to regulation, PINA inhibits the (weak) 5'-3' but not the 3'-5' helicase activity of this protein on overhang substrates. Functionally, DNA-dependent ATPase and 3'-5' DNA helicase that may be involved in repair of stalled replication forks. In terms of biological role, has predominantly 3'-5' helicase activity but also a weak 5'-3' helicase activity. Has the ability to unwind replication forks, preferentially removing the lagging strand. Hjc, Hjm (Hel308) and branch migration ATPase PINA coordinate HJ migration and cleavage of replication forks in a coordinated way. The sequence is that of ATP-dependent DNA helicase Hel308 from Saccharolobus islandicus (strain REY15A) (Sulfolobus islandicus).